A 319-amino-acid chain; its full sequence is ATP-dependent 6-phosphofructokinase (319 aa).

An ATP-binding site is contributed by glycine 11. 21 to 25 (RAVVR) contacts ADP. Residues 72-73 (RY) and 102-105 (GDGS) each bind ATP. Residue aspartate 103 coordinates Mg(2+). 125 to 127 (TID) contacts substrate. Catalysis depends on aspartate 127, which acts as the Proton acceptor. Arginine 154 is an ADP binding site. Residues arginine 162 and 169 to 171 (MGR) each bind substrate. Residues 185–187 (GAE), arginine 211, and 213–215 (KKH) each bind ADP. Substrate contacts are provided by residues glutamate 222, arginine 243, and 249 to 252 (HVQR).

Belongs to the phosphofructokinase type A (PFKA) family. ATP-dependent PFK group I subfamily. Prokaryotic clade 'B1' sub-subfamily. As to quaternary structure, homotetramer. Mg(2+) is required as a cofactor.

It is found in the cytoplasm. The catalysed reaction is beta-D-fructose 6-phosphate + ATP = beta-D-fructose 1,6-bisphosphate + ADP + H(+). The protein operates within carbohydrate degradation; glycolysis; D-glyceraldehyde 3-phosphate and glycerone phosphate from D-glucose: step 3/4. With respect to regulation, allosterically activated by ADP and other diphosphonucleosides, and allosterically inhibited by phosphoenolpyruvate. Functionally, catalyzes the phosphorylation of D-fructose 6-phosphate to fructose 1,6-bisphosphate by ATP, the first committing step of glycolysis. This is ATP-dependent 6-phosphofructokinase from Listeria monocytogenes serotype 4a (strain HCC23).